Here is a 236-residue protein sequence, read N- to C-terminus: 2-C-methyl-D-erythritol 4-phosphate cytidylyltransferase (236 aa).

It belongs to the IspD/TarI cytidylyltransferase family. IspD subfamily.

The catalysed reaction is 2-C-methyl-D-erythritol 4-phosphate + CTP + H(+) = 4-CDP-2-C-methyl-D-erythritol + diphosphate. It functions in the pathway isoprenoid biosynthesis; isopentenyl diphosphate biosynthesis via DXP pathway; isopentenyl diphosphate from 1-deoxy-D-xylulose 5-phosphate: step 2/6. Its function is as follows. Catalyzes the formation of 4-diphosphocytidyl-2-C-methyl-D-erythritol from CTP and 2-C-methyl-D-erythritol 4-phosphate (MEP). The sequence is that of 2-C-methyl-D-erythritol 4-phosphate cytidylyltransferase from Burkholderia cenocepacia (strain ATCC BAA-245 / DSM 16553 / LMG 16656 / NCTC 13227 / J2315 / CF5610) (Burkholderia cepacia (strain J2315)).